Consider the following 511-residue polypeptide: Inner membrane ABC transporter permease protein YnjC (511 aa).

Residues 1 to 8 (MATPLRYA) are Cytoplasmic-facing. A helical transmembrane segment spans residues 9-29 (LIFLLWAMVAVIYAPLIPAAL). The Periplasmic segment spans residues 30 to 62 (TLISPALSLTHWQALFADPQLPQALLATLVSTT). Positions 54 to 255 (LLATLVSTTI…MLLLAAYVLL (202 aa)) constitute an ABC transmembrane type-1 1 domain. A helical membrane pass occupies residues 63–83 (IAAVGALLIALLVIVALWPGP). Residues 84 to 91 (KWQRMCAR) are Cytoplasmic-facing. The chain crosses the membrane as a helical span at residues 92–112 (LPWLLAIPHVAFATSALLLFA). The Periplasmic portion of the chain corresponds to 113 to 130 (DGGLLYDYFPYFTPPMDR). The helical transmembrane segment at 131–151 (FGIGLGLTLAVKESAFLLWIL) threads the bilayer. Over 152–189 (AAVLSEKWLLQQVIVLDSLGYSRWQCLNWLLLPSVAPA) the chain is Cytoplasmic. The helical transmembrane segment at 190-210 (LAMAMLAIVAWSLSVVDVAII) threads the bilayer. Topologically, residues 211 to 239 (LGPGNPPTLAVISWQWLTQGDIDQQTKGA) are periplasmic. A helical membrane pass occupies residues 240–260 (LASLLLMLLLAAYVLLSYLLW). At 261–284 (RSWRRTIPRVDGVRKPATPLLPGN) the chain is on the cytoplasmic side. Residues 285–305 (TLAIFLPLTGVLCVVLLAILA) traverse the membrane as a helical segment. At 306-318 (DQSTINSEALINS) the chain is on the periplasmic side. The ABC transmembrane type-1 2 domain occupies 315-496 (LINSLTMGLV…LLPLIIFALT (182 aa)). Residues 319–339 (LTMGLVATFIALLLLLLWLEW) form a helical membrane-spanning segment. The Cytoplasmic segment spans residues 340-345 (GPQRRQ). The helical transmembrane segment at 346–366 (LWLWLPILLPALPLVAGQYTL) threads the bilayer. Residues 367 to 374 (ALWLKLDG) are Periplasmic-facing. A helical transmembrane segment spans residues 375-395 (SWTAVVWGHLLWVMPWMLFIL). Over 396 to 432 (QPAWQRIDSRLILIAQTLGWSRAKIFFYVKCPLMLRP) the chain is Cytoplasmic. The chain crosses the membrane as a helical span at residues 433–453 (VLIAFAVGFAVGIAQYMPTLW). Topologically, residues 454-485 (LGAGRFPTLTTEAVALSSGGSNGILAAQALWQ) are periplasmic. A helical membrane pass occupies residues 486–506 (LLLPLIIFALTALVAKWVGYV). Topologically, residues 507-511 (RQGLR) are cytoplasmic.

The protein belongs to the binding-protein-dependent transport system permease family.

It is found in the cell inner membrane. Functionally, probably part of the binding-protein-dependent transport system YnjCD. Probably responsible for the translocation of the substrate across the membrane. In Escherichia coli (strain K12), this protein is Inner membrane ABC transporter permease protein YnjC (ynjC).